Reading from the N-terminus, the 275-residue chain is Exosome complex component Rrp42 (275 aa).

The protein belongs to the RNase PH family. Rrp42 subfamily. As to quaternary structure, component of the archaeal exosome complex. Forms a hexameric ring-like arrangement composed of 3 Rrp41-Rrp42 heterodimers. The hexameric ring associates with a trimer of Rrp4 and/or Csl4 subunits.

It localises to the cytoplasm. Functionally, non-catalytic component of the exosome, which is a complex involved in RNA degradation. Contributes to the structuring of the Rrp41 active site. In Saccharolobus islandicus (strain M.16.27) (Sulfolobus islandicus), this protein is Exosome complex component Rrp42.